A 62-amino-acid chain; its full sequence is Small ribosomal subunit protein uS14 (62 aa).

Residues Cys25, Cys28, Cys41, and Cys44 each coordinate Zn(2+).

It belongs to the universal ribosomal protein uS14 family. Zinc-binding uS14 subfamily. As to quaternary structure, part of the 30S ribosomal subunit. Contacts proteins S3 and S10. Zn(2+) is required as a cofactor.

Its function is as follows. Binds 16S rRNA, required for the assembly of 30S particles and may also be responsible for determining the conformation of the 16S rRNA at the A site. This is Small ribosomal subunit protein uS14 from Hydrogenobaculum sp. (strain Y04AAS1).